Here is a 170-residue protein sequence, read N- to C-terminus: RxLR effector protein PITG_07555 (170 aa).

Residues 1 to 17 (MQAYHLLLVCMYISCSA) form the signal peptide. The RxLR-dEER signature appears at 50 to 62 (RALRTHNPDREER).

Belongs to the RxLR effector family.

It is found in the secreted. Its subcellular location is the host cytoplasm. It localises to the host nucleus. In terms of biological role, effector that enhances P.infestans colonization of Nicotiana benthamiana leaves. The chain is RxLR effector protein PITG_07555 from Phytophthora infestans (strain T30-4) (Potato late blight agent).